The sequence spans 418 residues: FK506-binding protein 3 (418 aa).

Disordered stretches follow at residues 49 to 133 (PSTL…DDEF), 172 to 273 (SLTG…ETKK), and 289 to 309 (LEEGPTKKEEKKEEKKEKPKT). Acidic residues predominate over residues 61-89 (YDDEDDAGGLLGDYDEDELDISEEEEEEE). Basic residues predominate over residues 93-103 (KSKKGKGKGKS). Acidic residues-rich tracts occupy residues 108–133 (EEEEEEEEDEDEGDEELIEIDTDDEF) and 186–224 (GYDDEDDDEEDDESYDEDEDDYLTPDEEADLEELEDASD). Over residues 225–239 (VEAKIQELVEKEQSK) the composition is skewed to basic and acidic residues. The segment covering 251–264 (PEEEEEEEEEEEEE) has biased composition (acidic residues). The 87-residue stretch at 332-418 (GSKVGMRYIG…TFDVKLVSLK (87 aa)) folds into the PPIase FKBP-type domain.

Belongs to the FKBP-type PPIase family. FKBP3/4 subfamily.

It localises to the nucleus. It is found in the nucleolus. It carries out the reaction [protein]-peptidylproline (omega=180) = [protein]-peptidylproline (omega=0). Inhibited by both FK506 and rapamycin. In terms of biological role, PPIases accelerate the folding of proteins. It catalyzes the cis-trans isomerization of proline imidic peptide bonds in oligopeptides. This Kluyveromyces lactis (strain ATCC 8585 / CBS 2359 / DSM 70799 / NBRC 1267 / NRRL Y-1140 / WM37) (Yeast) protein is FK506-binding protein 3 (FPR3).